The sequence spans 94 residues: DNA-directed RNA polymerase subunit omega (94 aa).

Belongs to the RNA polymerase subunit omega family. In terms of assembly, the RNAP catalytic core consists of 2 alpha, 1 beta, 1 beta' and 1 omega subunit. When a sigma factor is associated with the core the holoenzyme is formed, which can initiate transcription.

It carries out the reaction RNA(n) + a ribonucleoside 5'-triphosphate = RNA(n+1) + diphosphate. Its function is as follows. Promotes RNA polymerase assembly. Latches the N- and C-terminal regions of the beta' subunit thereby facilitating its interaction with the beta and alpha subunits. This Parafrankia sp. (strain EAN1pec) protein is DNA-directed RNA polymerase subunit omega.